The sequence spans 283 residues: MEIVKMHGLGNDFVFIDHFQGAPAELPDYPELARKLCHRQFGVGGDGLIMVLPSDKADARMRILNSDGSEPEMCGNGIRCFARYIYDQGYVSQNPLQVETLAGILTLQLSITGDQVTGVRVDMGEPILKSEQVPVLIQGDPVVGARLDVDGQEFEFTAVSMGNPHCVLFVEDYETLDFERIGPAIEKHPLFPRKTNVEFIIVNSPRELTMKVWERGAGPTLACGTGACASVVAAVLNGRTERKVTVHLPGGDLLIEWGEDNRVYMTGPAAYVFKGVLLEDALS.

Substrate is bound by residues asparagine 11 and asparagine 65. The Proton donor role is filled by cysteine 74. Residues 75-76 (GN), asparagine 163, asparagine 196, and 214-215 (ER) each bind substrate. Residue cysteine 223 is the Proton acceptor of the active site. Substrate is bound at residue 224–225 (GT).

The protein belongs to the diaminopimelate epimerase family. In terms of assembly, homodimer.

The protein localises to the cytoplasm. The enzyme catalyses (2S,6S)-2,6-diaminopimelate = meso-2,6-diaminopimelate. It functions in the pathway amino-acid biosynthesis; L-lysine biosynthesis via DAP pathway; DL-2,6-diaminopimelate from LL-2,6-diaminopimelate: step 1/1. Its function is as follows. Catalyzes the stereoinversion of LL-2,6-diaminopimelate (L,L-DAP) to meso-diaminopimelate (meso-DAP), a precursor of L-lysine and an essential component of the bacterial peptidoglycan. This chain is Diaminopimelate epimerase, found in Desulfitobacterium hafniense (strain DSM 10664 / DCB-2).